The primary structure comprises 658 residues: Translation factor GUF1, mitochondrial (658 aa).

Residues 1–40 constitute a mitochondrion transit peptide; it reads MRGCLQTVRWLTSAWQRPPSYPPLSRAAPCRFFNVSIPRN. In terms of domain architecture, tr-type G spans 60–240; sequence DRFRNFCIVA…TVVEQIPAPV (181 aa). GTP contacts are provided by residues 69–76, 133–137, and 187–190; these read AHVDHGKS, DTPGH, and NKVD.

The protein belongs to the TRAFAC class translation factor GTPase superfamily. Classic translation factor GTPase family. LepA subfamily.

It is found in the mitochondrion inner membrane. It carries out the reaction GTP + H2O = GDP + phosphate + H(+). Promotes mitochondrial protein synthesis. May act as a fidelity factor of the translation reaction, by catalyzing a one-codon backward translocation of tRNAs on improperly translocated ribosomes. Binds to mitochondrial ribosomes in a GTP-dependent manner. The polypeptide is Translation factor GUF1, mitochondrial (Paracoccidioides brasiliensis (strain Pb18)).